The primary structure comprises 358 residues: Septin-12 (358 aa).

The segment at 1 to 25 (MDPLRRSPSPCLSSQPSSPSTPPCE) is disordered. Positions 6–18 (RSPSPCLSSQPSS) are enriched in low complexity. Positions 46–317 (MGFEFNIMVV…ENYRVIRLNE (272 aa)) constitute a Septin-type G domain. Residues 46-319 (MGFEFNIMVV…YRVIRLNESH (274 aa)) form an interaction with SEPTIN7 region. Residues 56–63 (GQSGLGKS) form a G1 motif region. GTP-binding positions include 56 to 63 (GQSGLGKS), Thr-89, Gly-115, 195 to 203 (RADSLTMEE), Gly-251, and Arg-266. Residues 112-115 (DTPG) form a G3 motif region. Residues 194-197 (ARAD) form a G4 motif region. Residues 258–358 (VNGRCVLGRK…GAHDDSDDEF (101 aa)) are self-association (via N-terminus) to polymerize octameric septin 12-7-6-2/4-2/4-6-7-12 filaments.

This sequence belongs to the TRAFAC class TrmE-Era-EngA-EngB-Septin-like GTPase superfamily. Septin GTPase family. As to quaternary structure, septins polymerize into heterooligomeric protein complexes that form filaments, and can associate with cellular membranes, actin filaments and microtubules. GTPase activity is required for filament formation. Interacts with SEPTIN6 and SEPTIN11. Self-associates. Component of a septin core octameric complex consisting of SEPTIN12, SEPTIN7, SEPTIN6 and SEPTIN2 or SEPTIN4 in the order 12-7-6-2-2-6-7-12 or 12-7-6-4-4-6-7-12 and located in the sperm annulus; the octamer polymerizes into filaments via the SEPTIN12 N- and C-termini; the SEPTIN12:SEPTIN7 association is mediated by the respective GTP-binding domains. Interacts with SPAG4 and LMNB1. Associates with alpha- and beta-tubulins. In terms of tissue distribution, widely expressed. Expressed in lymph node.

The protein localises to the cytoplasm. It localises to the cytoskeleton. The protein resides in the spindle. Its subcellular location is the nucleus. It is found in the cell projection. The protein localises to the cilium. It localises to the flagellum. Its function is as follows. Filament-forming cytoskeletal GTPase. Involved in spermatogenesis. Involved in the morphogenesis of sperm heads and the elongation of sperm tails probably implicating the association with alpha- and beta-tubulins. Forms a filamentous structure with SEPTIN7, SEPTIN6, SEPTIN2 and probably SEPTIN4 at the sperm annulus which is required for the structural integrity and motility of the sperm tail during postmeiotic differentiation. May play a role in cytokinesis (Potential). The chain is Septin-12 from Homo sapiens (Human).